The primary structure comprises 334 residues: F-box protein AUF1 (334 aa).

Residues 1–49 form the F-box domain; the sequence is MDAFDAIPDPVVIDILNRVGDVKTLIRCRSVSKRFNSLATQSESLLLQL.

As to quaternary structure, part of a SCF (ASK-cullin-F-box) protein ligase complex. Interacts with SKP1A/ASK1, SKP1B/ASK2, ASK11 and ASK13.

The protein resides in the nucleus. It functions in the pathway protein modification; protein ubiquitination. Its function is as follows. Component of SCF(ASK-cullin-F-box) E3 ubiquitin ligase complexes, which may mediate the ubiquitination and subsequent proteasomal degradation of target proteins. Involved in the control of basipetal and acropetal auxin transport by promoting the distribution and expression of the auxin transporter PIN2. Promotes cytokinin-mediated cell expansion in the root elongation and differentiation zone, without affecting root cell division. This chain is F-box protein AUF1, found in Arabidopsis thaliana (Mouse-ear cress).